Consider the following 448-residue polypeptide: Phosphoglucosamine mutase (448 aa).

Ser-101 functions as the Phosphoserine intermediate in the catalytic mechanism. Mg(2+) contacts are provided by Ser-101, Asp-242, Asp-244, and Asp-246. Ser-101 is subject to Phosphoserine.

The protein belongs to the phosphohexose mutase family. Requires Mg(2+) as cofactor. Activated by phosphorylation.

The catalysed reaction is alpha-D-glucosamine 1-phosphate = D-glucosamine 6-phosphate. Catalyzes the conversion of glucosamine-6-phosphate to glucosamine-1-phosphate. The sequence is that of Phosphoglucosamine mutase from Nitrobacter winogradskyi (strain ATCC 25391 / DSM 10237 / CIP 104748 / NCIMB 11846 / Nb-255).